The following is a 641-amino-acid chain: SH2 domain-containing protein A (641 aa).

Residues 355–384 are disordered; sequence VNGNGTSMEWRPQNHEEDNSSTDSENTEMR. An SH2 domain is found at 547 to 641; it reads WIEGFVTKEE…SRLGRIIRGI (95 aa).

Post-translationally, phosphorylated on tyrosine residues. Expressed in roots, leaves, stems and flowers.

The chain is SH2 domain-containing protein A from Arabidopsis thaliana (Mouse-ear cress).